The primary structure comprises 489 residues: Sphingolipid C9-methyltransferase (489 aa).

The next 2 membrane-spanning stretches (helical) occupy residues 29 to 49 (GAKNFSNWLLLGLLTGVPLFV) and 59 to 79 (TFIFFFILFAIPILMAYWTVL). S-adenosyl-L-methionine-binding positions include 202–203 (YT), 239–247 (LLDLGCGWG), 265–270 (TLGKNQ), and 295–296 (YR).

The protein belongs to the CFA/CMAS family.

It localises to the membrane. It catalyses the reaction a (4E,8E)-4-sphinga-4,8-dienine ceramide + S-adenosyl-L-methionine = a 9-methyl-(4E,8E)-sphinga-4,8-dienine ceramide + S-adenosyl-L-homocysteine + H(+). Its pathway is lipid metabolism; sphingolipid metabolism. Functionally, catalyzes methylation of the sphingoid base component of glucosylceramides (GluCers) at the C9-position. Sphingolipid C9-methylation requires 4,8-desaturated ceramides as substrates. Glucosylceramides play important roles in growth, differentiation and pathogenicity. The methyl group at the C9-position distinguishes fungal glucosylceramides from those of plants and animals, and may thus play a role in host-pathogen interactions enabling the host to recognize the fungal attack and initiate specific defense responses. The chain is Sphingolipid C9-methyltransferase from Komagataella phaffii (strain GS115 / ATCC 20864) (Yeast).